The primary structure comprises 309 residues: Mitochondrial brown fat uncoupling protein 1 (309 aa).

The Mitochondrial intermembrane segment spans residues 2 to 10 (VGHTESDVP). The helical transmembrane segment at 11–32 (PTMAVKIFSAGVAACVADIITF) threads the bilayer. Solcar repeat units lie at residues 11–106 (PTMA…VQEF), 113–203 (ASLG…MKEA), and 212–297 (DDVP…LKQE). At 33 to 77 (PLDTAKVRLQVGSAIQGECLISSAIRYKGVLGTIITLAKTEGPVK) the chain is on the mitochondrial matrix side. Residue Lys-60 coordinates fatty acid 16:0. Residues 78–100 (LYSGLPAGLQRQISFASLRIGLY) traverse the membrane as a helical segment. At 101 to 118 (DTVQEFFTTGKEASLGSK) the chain is on the mitochondrial intermembrane side. The helical transmembrane segment at 119–135 (ISAGLMTGGVAVFIGQP) threads the bilayer. The Mitochondrial matrix portion of the chain corresponds to 136 to 180 (TEVVKVRLQAQSHLHGPKPRYTGTYNAYRIIATTEGLTGLWKGTT). A helical membrane pass occupies residues 181–197 (PNLTRNVIINCTELVTY). Topologically, residues 198–214 (DLMKEALVKNKLLADDV) are mitochondrial intermembrane. A helical transmembrane segment spans residues 215-234 (PCHFVSAVVAGFCTTVLSSP). Residues 235 to 268 (VDVVKTRFVNSSPGQYTSVPNCAMMMLTREGPSA) are Mitochondrial matrix-facing. Position 256 is a cysteine sulfenic acid (-SOH) (Cys-256). The helical transmembrane segment at 269 to 291 (FFKGFVPSFLRLGSWNIIMFVCF) threads the bilayer. Lys-271 lines the fatty acid 16:0 pocket. At 292–309 (EQLKQELMKSRHTMDCAT) the chain is on the mitochondrial intermembrane side.

This sequence belongs to the mitochondrial carrier (TC 2.A.29) family. As to quaternary structure, most probably functions as a monomer. Binds one purine nucleotide per monomer. However, has also been suggested to function as a homodimer or a homotetramer. Tightly associates with cardiolipin in the mitochondrion inner membrane; may stabilize and regulate its activity. May undergo sulfenylation upon cold exposure. May increase the sensitivity of UCP1 thermogenic function to the activation by noradrenaline probably through structural effects. Post-translationally, may undergo ubiquitin-mediated proteasomal degradation.

The protein resides in the mitochondrion inner membrane. It carries out the reaction H(+)(in) = H(+)(out). Its activity is regulated as follows. Has no constitutive proton transporter activity and has to be activated by long-chain fatty acids/LCFAs. Inhibited by purine nucleotides. Both purine nucleotides and LCFAs bind the cytosolic side of the transporter and directly compete to activate or inhibit it. Activated by noradrenaline and reactive oxygen species. Despite lacking canonical translational encoding for selenocysteine, a small pool of the protein has been observed to selectively incorporate selenocysteine at 'Cys-256'. Selenocysteine-modified protein is highly sensitive to redox modification and may constitute a pool of protein highly sensitive to activation by elevated levels of reactive oxygen species (ROS). Functionally, mitochondrial protein responsible for thermogenic respiration, a specialized capacity of brown adipose tissue and beige fat that participates in non-shivering adaptive thermogenesis to temperature and diet variations and more generally to the regulation of energy balance. Functions as a long-chain fatty acid/LCFA and proton symporter, simultaneously transporting one LCFA and one proton through the inner mitochondrial membrane. However, LCFAs remaining associated with the transporter via their hydrophobic tails, it results in an apparent transport of protons activated by LCFAs. Thereby, dissipates the mitochondrial proton gradient and converts the energy of substrate oxydation into heat instead of ATP. Regulates the production of reactive oxygen species/ROS by mitochondria. The protein is Mitochondrial brown fat uncoupling protein 1 of Bos taurus (Bovine).